A 168-amino-acid chain; its full sequence is Sperm acrosome-associated protein 9 (168 aa).

In terms of assembly, microtubule inner protein component of sperm flagellar doublet microtubules. Interacts with CABP1 and CALR. Interacts with INCA1. Interacts with microtubules. As to expression, testis-specific. Expressed in round spermatids.

The protein resides in the cytoplasm. Its subcellular location is the cytoplasmic vesicle. It localises to the secretory vesicle. The protein localises to the acrosome. It is found in the cytoskeleton. The protein resides in the cilium basal body. Its subcellular location is the flagellum axoneme. It localises to the cilium axoneme. The protein localises to the nucleus. Its function is as follows. Microtubule inner protein (MIP) part of the dynein-decorated doublet microtubules (DMTs) of multiciliated respiratory cells and the distal singlet microtubules of monoflagellated spermatozoa. Forms an extensive interaction network cross-linking the lumen of axonemal doublet microtubules. The chain is Sperm acrosome-associated protein 9 (Spaca9) from Rattus norvegicus (Rat).